We begin with the raw amino-acid sequence, 100 residues long: uncharacterized protein (100 aa).

The protein localises to the mitochondrion. This is an uncharacterized protein from Arabidopsis thaliana (Mouse-ear cress).